The following is a 512-amino-acid chain: GTPase Obg (512 aa).

One can recognise an Obg domain in the interval 2 to 159 (ATFVDTVTLH…GDVVLELKVV (158 aa)). The region spanning 160-336 (ADVALVGYPS…LSFALAELVE (177 aa)) is the OBG-type G domain. Residues 166 to 173 (GYPSAGKS), 191 to 195 (FTTLH), 212 to 215 (DVPG), 288 to 291 (NKID), and 317 to 319 (STV) each bind GTP. Mg(2+) contacts are provided by Ser-173 and Thr-193. Residues 355-439 (PRAVNEKPFT…GDGIVFDWEP (85 aa)) enclose the OCT domain. The disordered stretch occupies residues 491-512 (GEAGLWADEDGTDEDASSDAKA). Residues 497 to 512 (ADEDGTDEDASSDAKA) show a composition bias toward acidic residues.

This sequence belongs to the TRAFAC class OBG-HflX-like GTPase superfamily. OBG GTPase family. Monomer. Requires Mg(2+) as cofactor.

It is found in the cytoplasm. Its function is as follows. An essential GTPase which binds GTP, GDP and possibly (p)ppGpp with moderate affinity, with high nucleotide exchange rates and a fairly low GTP hydrolysis rate. Plays a role in control of the cell cycle, stress response, ribosome biogenesis and in those bacteria that undergo differentiation, in morphogenesis control. This is GTPase Obg from Clavibacter michiganensis subsp. michiganensis (strain NCPPB 382).